A 201-amino-acid chain; its full sequence is ADP-ribosylation factor-related protein 1 (201 aa).

Methionine 1 bears the N-acetylmethionine mark. Residues 24-31 (GLDNAGKT), 75-79 (DLGGQ), and 134-137 (NKQD) each bind GTP.

It belongs to the small GTPase superfamily. Arf family. In terms of assembly, interacts with SYS1.

It localises to the golgi apparatus. It is found in the trans-Golgi network. In terms of biological role, trans-Golgi-associated GTPase that regulates protein sorting. Controls the targeting of ARL1 and its effector to the trans-Golgi. Required for the lipidation of chylomicrons in the intestine and required for VLDL lipidation in the liver. This chain is ADP-ribosylation factor-related protein 1 (ARFRP1), found in Bos taurus (Bovine).